We begin with the raw amino-acid sequence, 132 residues long: Small ribosomal subunit protein uS8 (132 aa).

This sequence belongs to the universal ribosomal protein uS8 family. As to quaternary structure, part of the 30S ribosomal subunit. Contacts proteins S5 and S12.

One of the primary rRNA binding proteins, it binds directly to 16S rRNA central domain where it helps coordinate assembly of the platform of the 30S subunit. The chain is Small ribosomal subunit protein uS8 from Caulobacter sp. (strain K31).